A 227-amino-acid chain; its full sequence is Cytochrome c oxidase subunit 2 (227 aa).

Topologically, residues 1–14 (MAYPFQLGLXDATS) are mitochondrial intermembrane. A helical transmembrane segment spans residues 15-45 (PIMEELLHFHDHTLMIVFLISSLVLYIITLM). Over 46-59 (LTTKLTHTSTMDAQ) the chain is Mitochondrial matrix. The chain crosses the membrane as a helical span at residues 60-87 (EVETVWTILPAIILILIALPSLRILYMM). Residues 88–227 (DEINNPSLTV…YFETWSAVMV (140 aa)) are Mitochondrial intermembrane-facing. The Cu cation site is built by His161, Cys196, Glu198, Cys200, His204, and Met207. Glu198 contacts Mg(2+).

Belongs to the cytochrome c oxidase subunit 2 family. As to quaternary structure, component of the cytochrome c oxidase (complex IV, CIV), a multisubunit enzyme composed of 14 subunits. The complex is composed of a catalytic core of 3 subunits MT-CO1, MT-CO2 and MT-CO3, encoded in the mitochondrial DNA, and 11 supernumerary subunits COX4I, COX5A, COX5B, COX6A, COX6B, COX6C, COX7A, COX7B, COX7C, COX8 and NDUFA4, which are encoded in the nuclear genome. The complex exists as a monomer or a dimer and forms supercomplexes (SCs) in the inner mitochondrial membrane with NADH-ubiquinone oxidoreductase (complex I, CI) and ubiquinol-cytochrome c oxidoreductase (cytochrome b-c1 complex, complex III, CIII), resulting in different assemblies (supercomplex SCI(1)III(2)IV(1) and megacomplex MCI(2)III(2)IV(2)). Found in a complex with TMEM177, COA6, COX18, COX20, SCO1 and SCO2. Interacts with TMEM177 in a COX20-dependent manner. Interacts with COX20. Interacts with COX16. Cu cation is required as a cofactor.

It localises to the mitochondrion inner membrane. The catalysed reaction is 4 Fe(II)-[cytochrome c] + O2 + 8 H(+)(in) = 4 Fe(III)-[cytochrome c] + 2 H2O + 4 H(+)(out). Its function is as follows. Component of the cytochrome c oxidase, the last enzyme in the mitochondrial electron transport chain which drives oxidative phosphorylation. The respiratory chain contains 3 multisubunit complexes succinate dehydrogenase (complex II, CII), ubiquinol-cytochrome c oxidoreductase (cytochrome b-c1 complex, complex III, CIII) and cytochrome c oxidase (complex IV, CIV), that cooperate to transfer electrons derived from NADH and succinate to molecular oxygen, creating an electrochemical gradient over the inner membrane that drives transmembrane transport and the ATP synthase. Cytochrome c oxidase is the component of the respiratory chain that catalyzes the reduction of oxygen to water. Electrons originating from reduced cytochrome c in the intermembrane space (IMS) are transferred via the dinuclear copper A center (CU(A)) of subunit 2 and heme A of subunit 1 to the active site in subunit 1, a binuclear center (BNC) formed by heme A3 and copper B (CU(B)). The BNC reduces molecular oxygen to 2 water molecules using 4 electrons from cytochrome c in the IMS and 4 protons from the mitochondrial matrix. This chain is Cytochrome c oxidase subunit 2 (MT-CO2), found in Vulpes corsac (Corsac fox).